The chain runs to 282 residues: Pantothenate synthetase (282 aa).

Residue 30–37 (MGYLHEGH) participates in ATP binding. Residue His37 is the Proton donor of the active site. Gln61 serves as a coordination point for (R)-pantoate. Residue Gln61 coordinates beta-alanine. 147–150 (GMKD) serves as a coordination point for ATP. Gln153 is a binding site for (R)-pantoate. Residues Val176 and 184–187 (KSSR) each bind ATP.

Belongs to the pantothenate synthetase family. Homodimer.

The protein localises to the cytoplasm. It catalyses the reaction (R)-pantoate + beta-alanine + ATP = (R)-pantothenate + AMP + diphosphate + H(+). It functions in the pathway cofactor biosynthesis; (R)-pantothenate biosynthesis; (R)-pantothenate from (R)-pantoate and beta-alanine: step 1/1. In terms of biological role, catalyzes the condensation of pantoate with beta-alanine in an ATP-dependent reaction via a pantoyl-adenylate intermediate. The protein is Pantothenate synthetase of Bacillus thuringiensis subsp. konkukian (strain 97-27).